Consider the following 146-residue polypeptide: Large ribosomal subunit protein uL11 (146 aa).

It belongs to the universal ribosomal protein uL11 family. Part of the ribosomal stalk of the 50S ribosomal subunit. Interacts with L10 and the large rRNA to form the base of the stalk. L10 forms an elongated spine to which L12 dimers bind in a sequential fashion forming a multimeric L10(L12)X complex. Post-translationally, one or more lysine residues are methylated.

Functionally, forms part of the ribosomal stalk which helps the ribosome interact with GTP-bound translation factors. This Salinibacter ruber (strain DSM 13855 / M31) protein is Large ribosomal subunit protein uL11.